The chain runs to 886 residues: Alanine--tRNA ligase (886 aa).

Zn(2+) is bound by residues H564, H568, C676, and H680.

It belongs to the class-II aminoacyl-tRNA synthetase family. Zn(2+) is required as a cofactor.

Its subcellular location is the cytoplasm. It carries out the reaction tRNA(Ala) + L-alanine + ATP = L-alanyl-tRNA(Ala) + AMP + diphosphate. In terms of biological role, catalyzes the attachment of alanine to tRNA(Ala) in a two-step reaction: alanine is first activated by ATP to form Ala-AMP and then transferred to the acceptor end of tRNA(Ala). Also edits incorrectly charged Ser-tRNA(Ala) and Gly-tRNA(Ala) via its editing domain. The sequence is that of Alanine--tRNA ligase from Methylobacterium sp. (strain 4-46).